Here is a 180-residue protein sequence, read N- to C-terminus: Shikimate kinase (180 aa).

14–19 (GAGKSC) contributes to the ATP binding site. Residue Ser18 coordinates Mg(2+). Positions 36, 60, and 82 each coordinate substrate. Arg120 serves as a coordination point for ATP. Arg139 is a binding site for substrate.

It belongs to the shikimate kinase family. In terms of assembly, monomer. The cofactor is Mg(2+).

It localises to the cytoplasm. It carries out the reaction shikimate + ATP = 3-phosphoshikimate + ADP + H(+). The protein operates within metabolic intermediate biosynthesis; chorismate biosynthesis; chorismate from D-erythrose 4-phosphate and phosphoenolpyruvate: step 5/7. Functionally, catalyzes the specific phosphorylation of the 3-hydroxyl group of shikimic acid using ATP as a cosubstrate. In Xanthomonas campestris pv. campestris (strain 8004), this protein is Shikimate kinase.